The primary structure comprises 580 residues: tRNA-guanine(15) transglycosylase (580 aa).

The active-site Nucleophile is the Asp-91. Positions 126 and 192 each coordinate substrate. Zn(2+) contacts are provided by Cys-275, Cys-277, and Cys-280. The PUA domain maps to 504 to 579 (RMRVVVDEDA…LAVKVRRGVE (76 aa)).

It belongs to the archaeosine tRNA-ribosyltransferase family. Zn(2+) is required as a cofactor.

The enzyme catalyses guanosine(15) in tRNA + 7-cyano-7-deazaguanine = 7-cyano-7-carbaguanosine(15) in tRNA + guanine. It functions in the pathway tRNA modification; archaeosine-tRNA biosynthesis. Functionally, exchanges the guanine residue with 7-cyano-7-deazaguanine (preQ0) at position 15 in the dihydrouridine loop (D-loop) of archaeal tRNAs. The protein is tRNA-guanine(15) transglycosylase of Thermococcus kodakarensis (strain ATCC BAA-918 / JCM 12380 / KOD1) (Pyrococcus kodakaraensis (strain KOD1)).